Here is a 195-residue protein sequence, read N- to C-terminus: 4'-phosphopantetheinyl transferase AcpT (195 aa).

The protein belongs to the P-Pant transferase superfamily. Gsp/Sfp/HetI/AcpT family.

The enzyme catalyses apo-[ACP] + CoA = holo-[ACP] + adenosine 3',5'-bisphosphate + H(+). In terms of biological role, may be involved in an alternative pathway for phosphopantetheinyl transfer and holo-ACP synthesis in E.coli. The native apo-protein substrate is unknown. Is able to functionally replace AcpS in vivo but only when expressed at high levels. This Escherichia coli (strain K12) protein is 4'-phosphopantetheinyl transferase AcpT.